Consider the following 245-residue polypeptide: MLIIPAIDLKDGACVRLRQGRMEDSTVFSDDPVSMAAKWVEGGCRRLHLVDLNGAFEGQPVNGEVVTAIAKRYPNLPIQIGGGIRTLETIEHYVRAGVSYVIIGTKAVKEPEFVTEACKAFPGKVIVGLDAKDGFVATDGWAEVSSVQATDLAKRFEADGVSAIVYTDIAKDGMMQGCNVEATAALAAASKIPVIASGGIHNLGDIEKLLLARSPGIIGAITGRAIYEGTLDVAEAQAFCDSFKG.

Catalysis depends on aspartate 8, which acts as the Proton acceptor. Aspartate 130 (proton donor) is an active-site residue.

This sequence belongs to the HisA/HisF family.

It localises to the cytoplasm. It carries out the reaction 1-(5-phospho-beta-D-ribosyl)-5-[(5-phospho-beta-D-ribosylamino)methylideneamino]imidazole-4-carboxamide = 5-[(5-phospho-1-deoxy-D-ribulos-1-ylimino)methylamino]-1-(5-phospho-beta-D-ribosyl)imidazole-4-carboxamide. It participates in amino-acid biosynthesis; L-histidine biosynthesis; L-histidine from 5-phospho-alpha-D-ribose 1-diphosphate: step 4/9. The chain is 1-(5-phosphoribosyl)-5-[(5-phosphoribosylamino)methylideneamino] imidazole-4-carboxamide isomerase from Ectopseudomonas mendocina (strain ymp) (Pseudomonas mendocina).